Reading from the N-terminus, the 101-residue chain is Small ribosomal subunit protein bS18c (101 aa).

Belongs to the bacterial ribosomal protein bS18 family. As to quaternary structure, part of the 30S ribosomal subunit.

It is found in the plastid. The protein localises to the chloroplast. The protein is Small ribosomal subunit protein bS18c of Nymphaea alba (White water-lily).